The sequence spans 220 residues: Probable GTP-binding protein EngB (220 aa).

Positions 23–199 (SVREVAFAGR…ERVLASWLDI (177 aa)) constitute an EngB-type G domain. The Mg(2+) site is built by S38 and T60.

It belongs to the TRAFAC class TrmE-Era-EngA-EngB-Septin-like GTPase superfamily. EngB GTPase family. Requires Mg(2+) as cofactor.

Its function is as follows. Necessary for normal cell division and for the maintenance of normal septation. This Dechloromonas aromatica (strain RCB) protein is Probable GTP-binding protein EngB.